We begin with the raw amino-acid sequence, 476 residues long: Acidic leucine-rich nuclear phosphoprotein 32-related protein 1 (476 aa).

LRR repeat units lie at residues 51–72, 73–92, and 98–119; these read SLEH…PRLR, NLTR…DHLV, and SLRD…SPLA. Positions 131-169 constitute an LRRCT domain; that stretch reads CPVTRVKDYRSKVFGMIRTLKYLDKMDADENERPESDDD. The tract at residues 157–476 is disordered; sequence DADENERPES…VEDLRPFKHH (320 aa). 8 stretches are compositionally biased toward acidic residues: residues 165 to 194, 222 to 232, 252 to 289, 299 to 329, 353 to 371, 379 to 396, 415 to 436, and 458 to 467; these read ESDD…EDPG, DVDEDESDADE, GDED…EDAV, SDEE…EAEP, EGED…EERL, EGND…EDTE, DAAE…DDGG, and GDDDEDDDGV.

This sequence belongs to the ANP32 family.

This is Acidic leucine-rich nuclear phosphoprotein 32-related protein 1 from Oryza sativa subsp. japonica (Rice).